A 491-amino-acid polypeptide reads, in one-letter code: Aspartyl/glutamyl-tRNA(Asn/Gln) amidotransferase subunit B (491 aa).

The protein belongs to the GatB/GatE family. GatB subfamily. In terms of assembly, heterotrimer of A, B and C subunits.

The catalysed reaction is L-glutamyl-tRNA(Gln) + L-glutamine + ATP + H2O = L-glutaminyl-tRNA(Gln) + L-glutamate + ADP + phosphate + H(+). The enzyme catalyses L-aspartyl-tRNA(Asn) + L-glutamine + ATP + H2O = L-asparaginyl-tRNA(Asn) + L-glutamate + ADP + phosphate + 2 H(+). In terms of biological role, allows the formation of correctly charged Asn-tRNA(Asn) or Gln-tRNA(Gln) through the transamidation of misacylated Asp-tRNA(Asn) or Glu-tRNA(Gln) in organisms which lack either or both of asparaginyl-tRNA or glutaminyl-tRNA synthetases. The reaction takes place in the presence of glutamine and ATP through an activated phospho-Asp-tRNA(Asn) or phospho-Glu-tRNA(Gln). In Prochlorococcus marinus (strain NATL2A), this protein is Aspartyl/glutamyl-tRNA(Asn/Gln) amidotransferase subunit B.